Consider the following 736-residue polypeptide: Oligopeptide transporter 6 (736 aa).

15 helical membrane passes run 43–63, 66–86, 116–136, 148–168, 210–230, 258–278, 288–308, 357–377, 412–432, 443–463, 489–511, 527–547, 602–622, 645–665, and 678–698; these read MWVL…FFWY, MPLS…GHLM, VLIT…HILS, FLPA…WAGL, FFLI…YLFT, LGIG…GSPL, VAIG…WLNI, FFAV…VHVL, VPLW…MFIS, WWGV…IGVI, PVAN…TFIS, FMAQ…TAWW, WFFL…KMFP, ATAV…HFIF, and VLSG…FLAL.

It belongs to the oligopeptide OPT transporter (TC 2.A.67.1) family. In terms of tissue distribution, expressed in flowers and roots, and at a low level in leaves and stems. Detected in the cambial zone of the vascular bundles and in the region of lateral root initiation. Low expression in the vascular network of the petals and high in the stamen filaments and the gynoecium.

The protein localises to the membrane. Functionally, involved in the translocation of tetra- and pentapeptides across the cellular membrane in an energy-dependent manner. Also involved in transport of glutathione derivatives and metal complexes, and may be involved in stress resistance. The protein is Oligopeptide transporter 6 (OPT6) of Arabidopsis thaliana (Mouse-ear cress).